A 232-amino-acid chain; its full sequence is 2-C-methyl-D-erythritol 4-phosphate cytidylyltransferase (232 aa).

The protein belongs to the IspD/TarI cytidylyltransferase family. IspD subfamily.

The enzyme catalyses 2-C-methyl-D-erythritol 4-phosphate + CTP + H(+) = 4-CDP-2-C-methyl-D-erythritol + diphosphate. The protein operates within isoprenoid biosynthesis; isopentenyl diphosphate biosynthesis via DXP pathway; isopentenyl diphosphate from 1-deoxy-D-xylulose 5-phosphate: step 2/6. Its function is as follows. Catalyzes the formation of 4-diphosphocytidyl-2-C-methyl-D-erythritol from CTP and 2-C-methyl-D-erythritol 4-phosphate (MEP). This is 2-C-methyl-D-erythritol 4-phosphate cytidylyltransferase from Neorickettsia sennetsu (strain ATCC VR-367 / Miyayama) (Ehrlichia sennetsu).